The sequence spans 380 residues: SAM and SH3 domain-containing protein 3 (380 aa).

Residues 1–76 (MLRRKPSNAS…KSGKKLGKKW (76 aa)) are disordered. Residues 22 to 41 (LQRSSSFKDFAKSKPSSPVV) show a composition bias toward low complexity. S27, S34, and S42 each carry phosphoserine. A Phosphothreonine modification is found at T61. Residue S97 is modified to Phosphoserine. Disordered stretches follow at residues 98-174 (EEMA…TGPF), 237-256 (VGHA…KPKT), and 318-380 (TGSE…AGAP). T103 is modified (phosphothreonine). S110 bears the Phosphoserine mark. Residue T112 is modified to Phosphothreonine. Position 113 is a phosphoserine (S113). Y116 bears the Phosphotyrosine mark. S120 carries the post-translational modification Phosphoserine. Residues 143-152 (RQASTGSELC) show a composition bias toward polar residues. Positions 153-164 (SPSPGSGSFGEE) are enriched in low complexity. Residues 173-234 (PFCGRARVHT…KFIYVDVLPE (62 aa)) form the SH3 domain. The segment covering 241–255 (RPSRRQSKGKRPKPK) has biased composition (basic residues). Residues 252–316 (PKPKTLHELL…LTAAELLLDY (65 aa)) form the SAM domain. T318 is subject to Phosphothreonine. Residues 318-327 (TGSEEAEEGA) are compositionally biased toward acidic residues. At S320 the chain carries Phosphoserine.

May function as a signaling adapter protein in lymphocytes. In Homo sapiens (Human), this protein is SAM and SH3 domain-containing protein 3 (SASH3).